Consider the following 68-residue polypeptide: uncharacterized protein (68 aa).

The region spanning 2 to 67 (KTITLNIKGI…VIEDAGFDAT (66 aa)) is the HMA domain. Residues C13 and C16 each contribute to the a metal cation site.

This is an uncharacterized protein from Haemophilus influenzae (strain ATCC 51907 / DSM 11121 / KW20 / Rd).